Reading from the N-terminus, the 232-residue chain is Ras association domain-containing protein 3 (232 aa).

S2 carries the N-acetylserine modification. Residues 25–46 (RAPPGKSRSGQPDVEKEKETHN) form a disordered region. The span at 37–46 (DVEKEKETHN) shows a compositional bias: basic and acidic residues. Residues 78–180 (YTGFIKVQME…TLSFVLREHE (103 aa)) form the Ras-associating domain. One can recognise an SARAH domain in the interval 181–228 (IGEWEAFSLPELQNFLRILDKEEDEQLQSLKRRYTAYRQKLEEALGEV).

Its subcellular location is the cytoplasm. It is found in the cytoskeleton. The polypeptide is Ras association domain-containing protein 3 (Rassf3) (Mus musculus (Mouse)).